The sequence spans 101 residues: MTKSELIARLAERYPQLVAKDADYAVKTILDAMSDALATGQRIEIRGFGSFALNSRPPRIGRNPKSGDKVMVPEKRVPHFKPGKQLRERVDAMVGQPIIED.

It belongs to the bacterial histone-like protein family. As to quaternary structure, heterodimer of an alpha and a beta chain.

This protein is one of the two subunits of integration host factor, a specific DNA-binding protein that functions in genetic recombination as well as in transcriptional and translational control. The protein is Integration host factor subunit beta of Janthinobacterium sp. (strain Marseille) (Minibacterium massiliensis).